The primary structure comprises 436 residues: Succinyl-CoA:glutarate CoA-transferase (436 aa).

Residues 1 to 8 (MLWMLARA) constitute a mitochondrion transit peptide. Catalysis depends on Asp203, which acts as the Nucleophile. An N6-acetyllysine mark is found at Lys392 and Lys423.

Belongs to the CoA-transferase III family.

It localises to the mitochondrion. It carries out the reaction glutarate + succinyl-CoA = glutaryl-CoA + succinate. The catalysed reaction is 3-hydroxy-3-methylglutarate + succinyl-CoA = (3S)-3-hydroxy-3-methylglutaryl-CoA + succinate. The enzyme catalyses 3-hydroxy-3-methylglutarate + glutaryl-CoA = (3S)-3-hydroxy-3-methylglutaryl-CoA + glutarate. It catalyses the reaction hexanedioate + glutaryl-CoA = hexanedioyl-CoA + glutarate. It carries out the reaction itaconate + glutaryl-CoA = itaconyl-CoA + glutarate. The catalysed reaction is itaconate + succinyl-CoA = itaconyl-CoA + succinate. In terms of biological role, coenzyme A (CoA) transferase that reversibly catalyzes the transfer of a CoA moiety from a dicarboxyl-CoA to a dicarboxylate in a metabolite recycling process. Displays preference for succinyl-CoA and glutarate-CoA as dicarboxyl-CoA donors and glutarate, succinate, adipate/hexanedioate, itaconate and 3-hydroxy-3-methylglutarate as dicarboxylate acceptors. Acts on intermediates or end products of lysine and tryptophan degradation pathway, in particular catalyzes succinyl-CoA-dependent reesterification of free glutarate into glutaryl-CoA to prevent renal excretion of glutarate. Upon inflammation, may convert macrophage-derived itaconate to itaconyl-CoA in erythroid precursors where it negatively regulates the TCA cycle and heme synthesis to limit erythroid differentiation in the context of stress erythropoiesis. This chain is Succinyl-CoA:glutarate CoA-transferase, found in Mus musculus (Mouse).